Reading from the N-terminus, the 508-residue chain is DNA polymerase II small subunit (508 aa).

Residues 66–80 (ASSAAQTSAPASTPP) show a composition bias toward low complexity. A disordered region spans residues 66–122 (ASSAAQTSAPASTPPDEATTHTDPSATDTPPNHDGGRAATADARSVEIDGDMTGAST). Over residues 86–95 (HTDPSATDTP) the composition is skewed to polar residues.

This sequence belongs to the DNA polymerase delta/II small subunit family. In terms of assembly, heterodimer of a large subunit and a small subunit.

The enzyme catalyses DNA(n) + a 2'-deoxyribonucleoside 5'-triphosphate = DNA(n+1) + diphosphate. It catalyses the reaction Exonucleolytic cleavage in the 3'- to 5'-direction to yield nucleoside 5'-phosphates.. Possesses two activities: a DNA synthesis (polymerase) and an exonucleolytic activity that degrades single-stranded DNA in the 3' to 5' direction. Has a template-primer preference which is characteristic of a replicative DNA polymerase. In Halobacterium salinarum (strain ATCC 29341 / DSM 671 / R1), this protein is DNA polymerase II small subunit.